Reading from the N-terminus, the 1176-residue chain is Translation initiation factor IF-2 (1176 aa).

Composition is skewed to low complexity over residues Ile-32–Ser-44, Ala-57–Ser-79, Ala-94–Ser-166, and Lys-193–Thr-235. Disordered regions lie at residues Ile-32–Lys-502 and Arg-535–Arg-567. The span at Ala-251–Ala-270 shows a compositional bias: pro residues. Composition is skewed to low complexity over residues Gly-388–Arg-409 and Asn-439–Gly-469. Over residues Gly-478–Arg-492 the composition is skewed to basic and acidic residues. A compositionally biased stretch (basic residues) spans Val-553 to Arg-567. One can recognise a tr-type G domain in the interval Arg-668–Leu-840. The tract at residues Gly-677–Thr-684 is G1. Gly-677 to Thr-684 contacts GTP. Residues Gly-702–His-706 are G2. Residues Asp-727–Gly-730 are G3. GTP is bound by residues Asp-727–His-731 and Asn-781–Asp-784. The segment at Asn-781–Asp-784 is G4. Residues Ser-817–Ile-819 form a G5 region.

The protein belongs to the TRAFAC class translation factor GTPase superfamily. Classic translation factor GTPase family. IF-2 subfamily.

The protein resides in the cytoplasm. One of the essential components for the initiation of protein synthesis. Protects formylmethionyl-tRNA from spontaneous hydrolysis and promotes its binding to the 30S ribosomal subunits. Also involved in the hydrolysis of GTP during the formation of the 70S ribosomal complex. In Synechococcus sp. (strain CC9902), this protein is Translation initiation factor IF-2.